Consider the following 244-residue polypeptide: Derlin-2.1 (244 aa).

The Cytoplasmic segment spans residues 1-21 (MAQAVEEWYKQMPIITRSYLT). Residues 22 to 42 (AAVVTTVGCSLEIISPYNLYL) form a helical membrane-spanning segment. Over 43-96 (NPTLVVKQYQFWRLVTNFLYFRKMDLDFLFHMFFLARYCKLLEENSFRGKTADF) the chain is Lumenal. Residues 97–117 (LYMLLFGATVLTGIVLIGGMI) form a helical membrane-spanning segment. Residues 118 to 121 (PYLS) lie on the Cytoplasmic side of the membrane. The helical transmembrane segment at 122-142 (VSFSKIIFLSNSLTFMMVYVW) threads the bilayer. Residues 143–152 (SKQNPYIHMS) lie on the Lumenal side of the membrane. The chain crosses the membrane as a helical span at residues 153–173 (FLGLFTFTAAYLPWVLLGFSI). The Cytoplasmic portion of the chain corresponds to 174 to 244 (LVGASAWGDF…HAPFDEIHQD (71 aa)).

The protein belongs to the derlin family.

The protein localises to the endoplasmic reticulum membrane. May be involved in the degradation process of specific misfolded endoplasmic reticulum (ER) luminal proteins. In Arabidopsis thaliana (Mouse-ear cress), this protein is Derlin-2.1 (DER2.1).